A 146-amino-acid polypeptide reads, in one-letter code: Protein archease (146 aa).

The Ca(2+) site is built by Asp16, Asp145, and Ile146.

It belongs to the archease family.

In terms of biological role, activates the tRNA-splicing ligase complex by facilitating the enzymatic turnover of catalytic subunit RtcB. Acts by promoting the guanylylation of RtcB, a key intermediate step in tRNA ligation. Can also alter the NTP specificity of RtcB such that ATP, dGTP or ITP is used efficiently. This Methanosarcina acetivorans (strain ATCC 35395 / DSM 2834 / JCM 12185 / C2A) protein is Protein archease.